We begin with the raw amino-acid sequence, 136 residues long: Histone H3.2 (136 aa).

The interval 1–43 (MARTKQTARKSTGGKAPRKQLATKAARKSAPATGGVKKPHRFR) is disordered. An N6-methylated lysine modification is found at Lys-5. Lys-10 is modified (N6-acetyllysine; alternate). Lys-10 carries the N6-methylated lysine; alternate modification. Residue Ser-11 is modified to Phosphoserine. A Phosphothreonine modification is found at Thr-12. Lys-15 carries the N6-acetyllysine modification. Residues Lys-19 and Lys-24 each carry the N6-acetyllysine; alternate modification. 2 positions are modified to N6-methylated lysine; alternate: Lys-19 and Lys-24. Position 28 is an N6-methylated lysine (Lys-28). Position 29 is a phosphoserine (Ser-29). Residue Lys-37 is modified to N6-methylated lysine.

It belongs to the histone H3 family. In terms of assembly, the nucleosome is a histone octamer containing two molecules each of H2A, H2B, H3 and H4 assembled in one H3-H4 heterotetramer and two H2A-H2B heterodimers. The octamer wraps approximately 147 bp of DNA. In terms of processing, acetylation is generally linked to gene activation. Can be acetylated to form H3K9ac, H3K14ac, H3K18ac and H3K23ac. H3K9ac could compete with H3K9me and prevent gene silencing. H3K9ac is restricted to euchromatin. Post-translationally, methylated to form mainly H3K4me, H3K9me, H3K18me, H3K23me, H3K27me and H3K36me. H3K4me1/2/3, H3K9me3, H3K27me3 and H3K36me1/2/3 are typical marks for euchromatin, whereas heterochromatic chromocenters are enriched in H3K9me1/2 and H3K27me1/2. H2BK143ub1 is probably prerequisite for H3K4me. Can be phosphorylated to form H3S10ph, H3T11ph and H3S28ph.

It localises to the nucleus. It is found in the chromosome. Its function is as follows. Core component of nucleosome. Nucleosomes wrap and compact DNA into chromatin, limiting DNA accessibility to the cellular machineries which require DNA as a template. Histones thereby play a central role in transcription regulation, DNA repair, DNA replication and chromosomal stability. DNA accessibility is regulated via a complex set of post-translational modifications of histones, also called histone code, and nucleosome remodeling. This is Histone H3.2 from Encephalartos altensteinii (Altenstein's bread tree).